The chain runs to 150 residues: Probable deoxyuridine 5'-triphosphate nucleotidohydrolase (150 aa).

It belongs to the dCTP deaminase family. Archaeal dUTPase subfamily.

It catalyses the reaction dUTP + H2O = dUMP + diphosphate + H(+). It participates in pyrimidine metabolism; dUMP biosynthesis; dUMP from dCTP (dUTP route): step 2/2. This enzyme is involved in nucleotide metabolism: it produces dUMP, the immediate precursor of thymidine nucleotides and it decreases the intracellular concentration of dUTP so that uracil cannot be incorporated into DNA. The sequence is that of Probable deoxyuridine 5'-triphosphate nucleotidohydrolase from Methanothermobacter thermautotrophicus (strain ATCC 29096 / DSM 1053 / JCM 10044 / NBRC 100330 / Delta H) (Methanobacterium thermoautotrophicum).